A 473-amino-acid polypeptide reads, in one-letter code: Photosystem II CP43 reaction center protein (473 aa).

A propeptide spanning residues 1-14 (MKTLYSLRRFYHVE) is cleaved from the precursor. N-acetylthreonine is present on threonine 15. The residue at position 15 (threonine 15) is a Phosphothreonine. The next 5 membrane-spanning stretches (helical) occupy residues 69-93 (LFEV…PHLA), 134-155 (LLGP…KDRN), 178-200 (KALY…RKIT), 255-275 (KPFA…LSYS), and 291-312 (WFNN…ASQA). Glutamate 367 contributes to the [CaMn4O5] cluster binding site. Residues 447-471 (RARAAAAGFEKGIDRDFEPVLSMTP) traverse the membrane as a helical segment.

It belongs to the PsbB/PsbC family. PsbC subfamily. As to quaternary structure, PSII is composed of 1 copy each of membrane proteins PsbA, PsbB, PsbC, PsbD, PsbE, PsbF, PsbH, PsbI, PsbJ, PsbK, PsbL, PsbM, PsbT, PsbX, PsbY, PsbZ, Psb30/Ycf12, at least 3 peripheral proteins of the oxygen-evolving complex and a large number of cofactors. It forms dimeric complexes. Requires Binds multiple chlorophylls and provides some of the ligands for the Ca-4Mn-5O cluster of the oxygen-evolving complex. It may also provide a ligand for a Cl- that is required for oxygen evolution. PSII binds additional chlorophylls, carotenoids and specific lipids. as cofactor.

It localises to the plastid. It is found in the chloroplast thylakoid membrane. Its function is as follows. One of the components of the core complex of photosystem II (PSII). It binds chlorophyll and helps catalyze the primary light-induced photochemical processes of PSII. PSII is a light-driven water:plastoquinone oxidoreductase, using light energy to abstract electrons from H(2)O, generating O(2) and a proton gradient subsequently used for ATP formation. This Coffea arabica (Arabian coffee) protein is Photosystem II CP43 reaction center protein.